The chain runs to 1196 residues: MMMLIRCISIFLLFGFVNALIDEASCPIGWQIASDQCVRIVIAPANLKHSKKYCHHEGGELMDTSVTLLLEDVMDLLKNLHENGLSEPTFHVGGMGQALNRTEDGNYKIITINPSSHFPFICSLNKMARRSLLFQQKLLPVGAPQISLTGQSEIYFHPRHDADYIALPCTVQGNPKPTVAWYKNDVEVLSPSMSNVSYLLSGGNLLVPASSTLAYSSFHCTARNSLGEVRSPPILLKPSFIDPFRPHRLDVYSLATGGAKLDCDAPAHQPKSLTYSWLYGSSTDRILSQNERKFISLDGTLFFSYVTAEDEDSYACSLSVYSTQSGHYGPFFRLISSTPKLVNSTFPPKLDSTQPQIFPEDPKVGDSIYLECFAYASPLPQYKWSRVDGKPIPARSHISNYGRVLKIEKVNYGDAGKYKCVAMNAFGSAAGEVHVKLRAPPSILQGLHDRLVPTESNVSFECLLSNADSYSSVEWFKDAKPIVPLLLPAEKRKRLKIDHNVLHLKFADETDSGVYQCVASNDVGSSSSSALLTVKDSAPVFPPNAMSRKVFAAFGSTVSIPCIFEASPRFHGKWADAGGSKLPQKGRIRDEEGVISIEKVLHEDAGLFFCTAHNKLGKAHAQVQLIVVNKPSIKTNFLDEETVNMSCEVELTCENSAECPEALFEWKINDRPAKEYPSLKSKVHEKKSGHKGRHLKQKVDLEVPKSLAGSRQIGRFACSSLYGGSSEFVTKPQLPSPIALTVEQMDEDGKKKKMFRLRWRLPPQHRDTRDHSPKVEGYLVELRTRKNRKWRAAERQLVGNMEKDSITVENLLPNTEYQFRVRSVESAAIGEPSIPSDWVKTAPGAPSETIDNLKWRSLDSQTLLVEWQPIEIGQESSGDNLRYRVSWSEATVGKNATDDMKLSNQDDDFENHLDSDQPQAILKLNTTEGCRMVVLAVRPVNDQGNGSVGTDTIAFLNSHGELKKVSLHNVKPINASHVNISWTWDNTSDCDTKHAVQITCINLSGSEISATVASDRIFWMLGGLEAETAYDCDLKAIDNHGSFGPASKKFRIHTKQHPPSETPLIGKLMMKQMKDTYTTILEWSSIELQKPNRTENGCGYKIFIYISETATEAIELDMPLQRLSDRRNPSARLDGLKLMYMYTIKVAGYNPGGIGPISEPRSIRLGSPGTMDYTTGSSDVPIPSLLLLLLLLLWRL.

The first 19 residues, 1–19 (MMMLIRCISIFLLFGFVNA), serve as a signal peptide directing secretion. N-linked (GlcNAc...) asparagine glycans are attached at residues N100 and N195. Ig-like C2-type domains follow at residues 144-225 (PQIS…ARNS) and 232-319 (PPIL…CSLS). Cystine bridges form between C169–C220 and C263–C316. N343 carries N-linked (GlcNAc...) asparagine glycosylation. Ig-like C2-type domains are found at residues 355–438 (PQIF…VKLR), 441–533 (PSIL…ALLT), 539–626 (PVFP…VQLI), and 631–730 (PSIK…EFVT). C372 and C420 are joined by a disulfide. N457 carries N-linked (GlcNAc...) asparagine glycosylation. 2 disulfides stabilise this stretch: C462/C517 and C562/C610. N-linked (GlcNAc...) asparagine glycosylation occurs at N644. C653 and C718 form a disulfide bridge. Fibronectin type-III domains lie at 736–844 (SPIA…TAPG), 849–961 (TIDN…SHGE), 963–1057 (KKVS…TKQH), and 1064–1168 (LIGK…LGSP). N895, N925, N945, N974, N979, N986, N1002, and N1092 each carry an N-linked (GlcNAc...) asparagine glycan. Residues 1174-1194 (TTGSSDVPIPSLLLLLLLLLW) form a helical membrane-spanning segment. S1177 is lipidated: GPI-anchor amidated serine. Residues 1178-1196 (SDVPIPSLLLLLLLLLWRL) constitute a propeptide, removed in mature form.

The protein belongs to the immunoglobulin superfamily. Contactin family. In terms of assembly, interacts with sax-7; the interaction establishes synaptic connections between neurons. Expressed in neurons including the I1 and I3 pharyngeal interneurons, NSM and VNC motor neurons, HSN and CAN neurons, the ALM and PLM touch receptor neurons and other unidentified head neurons. Expressed in AVG interneurons. Also expressed in somatic muscles, the excretory canal, the excretory cell and the hypodermis.

The protein resides in the cell membrane. The protein localises to the perikaryon. It is found in the cell projection. It localises to the axon. Its subcellular location is the synapse. The protein resides in the cytoplasm. Probable cell adhesion protein involved in patterning of the nervous system, playing a role in ALM and PLM touch receptor axon growth and VNC axon navigation. By associating with the transmembrane protein sax-7, mediates axonal interactions to establish synaptic connections between the AVG interneuron and the two PHC sensory neurons. Also required for non-neuronal cell migration in the excretory canal, regulating excretory canal elongation and excretory cell morphogenesis. Plays a role in regulating male mating behavior. The protein is Contactin rig-6 of Caenorhabditis elegans.